Consider the following 73-residue polypeptide: MMSSKSHFVALLLIIFLIVNVQSTRIMDDSSDCVFKGPCQRRSDCYERCGLKPPSRAALCQPMGLQGRVCCCL.

Residues 1–23 (MMSSKSHFVALLLIIFLIVNVQS) form the signal peptide. Cystine bridges form between cysteine 33/cysteine 72, cysteine 39/cysteine 60, cysteine 45/cysteine 70, and cysteine 49/cysteine 71.

It belongs to the DEFL family.

It is found in the secreted. The chain is Putative defensin-like protein 270 from Arabidopsis thaliana (Mouse-ear cress).